We begin with the raw amino-acid sequence, 463 residues long: NADH dehydrogenase [ubiquinone] iron-sulfur protein 2, mitochondrial (463 aa).

Residues 1-33 (MAALRALGGLRGVAAQVLRPGAGVRLPIQPSRG) constitute a mitochondrion transit peptide. At Lys-62 the chain carries N6-acetyllysine. A Symmetric dimethylarginine modification is found at Arg-118. 3 residues coordinate [4Fe-4S] cluster: Cys-326, Cys-332, and Cys-347.

Belongs to the complex I 49 kDa subunit family. As to quaternary structure, core subunit of respiratory chain NADH dehydrogenase (Complex I) which is composed of 45 different subunits. Component of the iron-sulfur (IP) fragment of the enzyme. Interacts with NDUFAF3. Interacts with NDUFAF7. Interacts with CERS2. The cofactor is [4Fe-4S] cluster. Dimethylation at Arg-118 by NDUFAF7 takes place after NDUFS2 assembles into the complex I, leading to stabilize the early intermediate complex.

The protein localises to the mitochondrion inner membrane. It catalyses the reaction a ubiquinone + NADH + 5 H(+)(in) = a ubiquinol + NAD(+) + 4 H(+)(out). Core subunit of the mitochondrial membrane respiratory chain NADH dehydrogenase (Complex I) which catalyzes electron transfer from NADH through the respiratory chain, using ubiquinone as an electron acceptor. Essential for the catalytic activity and assembly of complex I. Redox-sensitive, critical component of the oxygen-sensing pathway in the pulmonary vasculature which plays a key role in acute pulmonary oxygen-sensing and hypoxic pulmonary vasoconstriction. Plays an important role in carotid body sensing of hypoxia. Essential for glia-like neural stem and progenitor cell proliferation, differentiation and subsequent oligodendrocyte or neuronal maturation. This is NADH dehydrogenase [ubiquinone] iron-sulfur protein 2, mitochondrial (NDUFS2) from Pongo pygmaeus (Bornean orangutan).